The primary structure comprises 346 residues: MILEQYGITSFFKEQKIAATSSYGRVTAVFRDYYRVITENEEFLASLKRGNFYELSSTSLPTVGDFVEISGDLQILSVLERKTVFSRMNKDSAEQLIAANFDYALIVMSLNHDFNLNRLERYLTVAWDSGATPIIILTKADLVEDLSFYAQQLEAVAYGVPAYYVDNLSHHGFEALESDLKPNSTLILLGSSGVGKSSFINSLAGTDLMKTAGIREDDSKGKHTTTHREMHLLSNGWIVIDTPGMREFGVGFNQAGLETTFSDVEELAEGCRFHDCSHTQEPNCAVQAALEDGTLTMQHYENWLKLQREMAYHARKNSPALARQERDRWKVIQKSMRTHFKTRPKK.

A CP-type G domain is found at 93–248 (AEQLIAANFD…VIDTPGMREF (156 aa)). GTP is bound by residues 138 to 141 (TKAD) and 190 to 198 (GSSGVGKSS). Residues C271, C276, H278, and C284 each contribute to the Zn(2+) site.

This sequence belongs to the TRAFAC class YlqF/YawG GTPase family. RsgA subfamily. As to quaternary structure, monomer. Associates with 30S ribosomal subunit, binds 16S rRNA. Requires Zn(2+) as cofactor.

It localises to the cytoplasm. Functionally, one of several proteins that assist in the late maturation steps of the functional core of the 30S ribosomal subunit. Helps release RbfA from mature subunits. May play a role in the assembly of ribosomal proteins into the subunit. Circularly permuted GTPase that catalyzes slow GTP hydrolysis, GTPase activity is stimulated by the 30S ribosomal subunit. This is Small ribosomal subunit biogenesis GTPase RsgA 1 from Listeria monocytogenes serovar 1/2a (strain ATCC BAA-679 / EGD-e).